Here is a 243-residue protein sequence, read N- to C-terminus: HTH-type quorum sensing-dependent transcriptional regulator RpaR (243 aa).

An HTH luxR-type domain is found at 174-239 (KPIRRNRLTP…AAVAKALTLG (66 aa)). Residues 198 to 217 (AWEISVILCITERTVKFHLI) constitute a DNA-binding region (H-T-H motif).

Belongs to the autoinducer-regulated transcriptional regulatory protein family.

In terms of biological role, responds to the quorum-sensing autoinducer 4-coumaroyl-homoserine lactone to regulate expression of several genes. Represses expression of rpaI in the absence of the inducer. This is HTH-type quorum sensing-dependent transcriptional regulator RpaR from Rhodopseudomonas palustris (strain ATCC BAA-98 / CGA009).